Reading from the N-terminus, the 153-residue chain is Partner of bursicon (153 aa).

An N-terminal signal peptide occupies residues 1–35 (MCNSVRTALAASNCCSIVLCCVLLLTLTLTVAVTA). Intrachain disulfides connect cysteine 44–cysteine 102, cysteine 68–cysteine 117, cysteine 77–cysteine 143, cysteine 81–cysteine 145, and cysteine 99–cysteine 148. The region spanning 44-139 (CETLPSEIHL…SATMEIRLKE (96 aa)) is the CTCK domain.

As to quaternary structure, heterodimer of burs and pburs.

It is found in the secreted. Functionally, final heterodimeric neurohormone released at the end of the molting cycle, involved in the sclerotization (tanning) of the insect cuticle, melanization and wing spreading. The sequence is that of Partner of bursicon from Anopheles gambiae (African malaria mosquito).